A 149-amino-acid chain; its full sequence is MLNIKIVRLHPLATLPAYATAHAAGMDVAACLEAPVSVAPFSTALIPTGFALELPIGYEAQLRPRSGLALRSMISLPNTPATIDADYRGEVKVILINYGKEPFMVQHGDRIAQMVIARVEQVQFEEVAELSATVRGEGGFGHTGIASVQ.

Residues 65 to 67, Asn-78, 82 to 84, and Lys-92 contribute to the substrate site; these read RSG and TID.

This sequence belongs to the dUTPase family. Mg(2+) serves as cofactor.

It carries out the reaction dUTP + H2O = dUMP + diphosphate + H(+). It functions in the pathway pyrimidine metabolism; dUMP biosynthesis; dUMP from dCTP (dUTP route): step 2/2. This enzyme is involved in nucleotide metabolism: it produces dUMP, the immediate precursor of thymidine nucleotides and it decreases the intracellular concentration of dUTP so that uracil cannot be incorporated into DNA. The protein is Deoxyuridine 5'-triphosphate nucleotidohydrolase of Chlorobium chlorochromatii (strain CaD3).